Here is a 183-residue protein sequence, read N- to C-terminus: Adenylate kinase (183 aa).

12–17 (GAGKGT) contributes to the ATP binding site. The tract at residues 32 to 61 (STGDLLRSEVAAGSELGKEAEAVMNRGELV) is NMP. Residues threonine 33, arginine 38, 59 to 61 (ELV), 86 to 89 (GFPR), and glutamine 93 contribute to the AMP site. Residues 127–133 (SRGRADD) are LID. Position 128 (arginine 128) interacts with ATP. Positions 130 and 141 each coordinate AMP. ATP is bound at residue glycine 169.

This sequence belongs to the adenylate kinase family. In terms of assembly, monomer.

It is found in the cytoplasm. The catalysed reaction is AMP + ATP = 2 ADP. Its pathway is purine metabolism; AMP biosynthesis via salvage pathway; AMP from ADP: step 1/1. Catalyzes the reversible transfer of the terminal phosphate group between ATP and AMP. Plays an important role in cellular energy homeostasis and in adenine nucleotide metabolism. The sequence is that of Adenylate kinase from Synechococcus sp. (strain CC9902).